Consider the following 195-residue polypeptide: UPF0215 protein TK2033 (195 aa).

Belongs to the UPF0215 family.

The sequence is that of UPF0215 protein TK2033 from Thermococcus kodakarensis (strain ATCC BAA-918 / JCM 12380 / KOD1) (Pyrococcus kodakaraensis (strain KOD1)).